Here is a 188-residue protein sequence, read N- to C-terminus: PRA1 family protein F4 (188 aa).

Residues 1–13 show a composition bias toward polar residues; it reads MANNDEITTSSHA. Positions 1 to 25 are disordered; it reads MANNDEITTSSHASPAVNHESISRA. Helical transmembrane passes span 67-86, 90-107, 119-139, and 142-162; these read YFRS…SLIW, SLIV…LYFL, IDDR…LLLT, and TFNI…HAVI.

This sequence belongs to the PRA1 family.

The protein localises to the endosome membrane. Its function is as follows. May be involved in both secretory and endocytic intracellular trafficking in the endosomal/prevacuolar compartments. This chain is PRA1 family protein F4 (PRA1F4), found in Arabidopsis thaliana (Mouse-ear cress).